A 292-amino-acid chain; its full sequence is 4-hydroxy-tetrahydrodipicolinate synthase (292 aa).

Thr-44 serves as a coordination point for pyruvate. Catalysis depends on Tyr-132, which acts as the Proton donor/acceptor. The active-site Schiff-base intermediate with substrate is Lys-161. Ile-203 lines the pyruvate pocket.

The protein belongs to the DapA family. Homotetramer; dimer of dimers.

It localises to the cytoplasm. The enzyme catalyses L-aspartate 4-semialdehyde + pyruvate = (2S,4S)-4-hydroxy-2,3,4,5-tetrahydrodipicolinate + H2O + H(+). It functions in the pathway amino-acid biosynthesis; L-lysine biosynthesis via DAP pathway; (S)-tetrahydrodipicolinate from L-aspartate: step 3/4. In terms of biological role, catalyzes the condensation of (S)-aspartate-beta-semialdehyde [(S)-ASA] and pyruvate to 4-hydroxy-tetrahydrodipicolinate (HTPA). This is 4-hydroxy-tetrahydrodipicolinate synthase from Fervidobacterium nodosum (strain ATCC 35602 / DSM 5306 / Rt17-B1).